The following is a 298-amino-acid chain: 4-hydroxy-tetrahydrodipicolinate synthase (298 aa).

Thr-51 is a pyruvate binding site. The Proton donor/acceptor role is filled by Tyr-139. The Schiff-base intermediate with substrate role is filled by Lys-167. Pyruvate is bound at residue Ile-209.

It belongs to the DapA family. As to quaternary structure, homotetramer; dimer of dimers.

The protein resides in the cytoplasm. The enzyme catalyses L-aspartate 4-semialdehyde + pyruvate = (2S,4S)-4-hydroxy-2,3,4,5-tetrahydrodipicolinate + H2O + H(+). It functions in the pathway amino-acid biosynthesis; L-lysine biosynthesis via DAP pathway; (S)-tetrahydrodipicolinate from L-aspartate: step 3/4. In terms of biological role, catalyzes the condensation of (S)-aspartate-beta-semialdehyde [(S)-ASA] and pyruvate to 4-hydroxy-tetrahydrodipicolinate (HTPA). This Pasteurella multocida (strain Pm70) protein is 4-hydroxy-tetrahydrodipicolinate synthase.